The chain runs to 706 residues: MALSPVRVTEGKPLGVYFYNVWREARLVIWYVSYTPSGQTEALDFVFVVQEVCDEKWSALPASAGEASAFESGIHTILWERELRGHNEWIAALEGRGGEVFVFEADAGRVLTGLRVKGEEEGVGGGGGGGGEGEYSPETLRNAYFFSQSRQEFSSGRGGDAGREEAGAPVSGKEKLWFRGMVEDVCVSDVDIVIRTARGVYSCPGGDGGEEGDGAEGGDGGVGGAGDGAGAGGGSSGKPPAGKRGRPTRLRITDLFRPVDCELAWRGRAVKLRPVLADFDVMWANPESAWNCCLPEFFRALLARTTRDFEGLPPALLYVFPAACREGSRFPPHFAGFPFFRVLFEPMRRVTADWLVAGDDRPPGGILLHHPPFYRSRLADRVLCPGLRGDEIVRRARAGGGNCWPLFATELNEGLCPEGRHDLLRVERAHALLTLDLARAACSMLGARVENPGEFLARVVETGSRDLLNAATSAYNLLLTGVLRWAAEAGFAWAAIDKSRVFLVSEAEPPSEDAEEIEESLWASLGDHPPPCVGLVSGYGRENASVFLLWKSDRVLVGKSSDLSCPERRCGSWRESLDAALSLTLTEAPDPAGILRELMPSYHAHRHETKFWLVDRAFAAGRPERAPPMPVDCLRPAPYLLIGEGAVCWHEALDLPLDVDFAAYLSETLSCVSAALAPPGGGGEAGEGRNNTDHCLEEFKSVLSLL.

The segment at 203 to 249 (CPGGDGGEEGDGAEGGDGGVGGAGDGAGAGGGSSGKPPAGKRGRPTR) is disordered. A compositionally biased stretch (gly residues) spans 217-236 (GGDGGVGGAGDGAGAGGGSS).

Belongs to the herpesviridae HEPA family. In terms of assembly, associates with the primase and the helicase to form the helicase-primase complex. Interacts with the origin-binding protein. Interacts with the polymerase catalytic subunit.

The protein localises to the host nucleus. Functionally, component of the helicase/primase complex. Unwinds the DNA at the replication forks and generates single-stranded DNA for both leading and lagging strand synthesis. The primase synthesizes short RNA primers on the lagging strand that the polymerase presumably elongates using dNTPs. The primase-associated factor has no known catalytic activity in the complex and may serve to facilitate the formation of the replisome by directly interacting with the origin-binding protein and the polymerase. The polypeptide is DNA helicase/primase complex-associated protein (40) (Equus caballus (Horse)).